The following is a 307-amino-acid chain: CRISPR-associated endonuclease Cas1 2 (307 aa).

Mn(2+) contacts are provided by Glu-142, His-206, and Glu-221.

This sequence belongs to the CRISPR-associated endonuclease Cas1 family. As to quaternary structure, homodimer, forms a heterotetramer with a Cas2 homodimer. Forms oligomers, probably binds nucleic acids as a homodimer. Requires Mg(2+) as cofactor. It depends on Mn(2+) as a cofactor.

Its function is as follows. CRISPR (clustered regularly interspaced short palindromic repeat), is an adaptive immune system that provides protection against mobile genetic elements (viruses, transposable elements and conjugative plasmids). CRISPR clusters contain spacers, sequences complementary to antecedent mobile elements, and target invading nucleic acids. CRISPR clusters are transcribed and processed into CRISPR RNA (crRNA). Acts as a dsDNA endonuclease. Involved in the integration of spacer DNA into the CRISPR cassette. In vitro catalyzes a concerted transesterification reaction on branched DNA, as would be expected during integration of protospacers into the CRISPR leader sequence; Cas2 is not required in vitro. This reaction requires a 3'-OH group at the branch point. Binds ss- and dsDNA and ss- and dsRNA with approximately equal affinity. May be able to anneal complementary DNA strands. The protein is CRISPR-associated endonuclease Cas1 2 of Saccharolobus solfataricus (strain ATCC 35092 / DSM 1617 / JCM 11322 / P2) (Sulfolobus solfataricus).